A 274-amino-acid chain; its full sequence is Penicillin-insensitive murein endopeptidase (274 aa).

The N-terminal stretch at 1-19 (MKKTAIALLAWFVSSASLA) is a signal peptide. Intrachain disulfides connect cysteine 44–cysteine 265, cysteine 187–cysteine 235, and cysteine 216–cysteine 223. Residues histidine 110, histidine 113, aspartate 120, aspartate 147, histidine 150, and histidine 211 each contribute to the Zn(2+) site. Positions 225-274 (DQPLPPPGDGCGAELQSWFEPPKLGTTKPEKKTPPPLPPSCQALLDEHVL) are disordered.

This sequence belongs to the peptidase M74 family. Dimer. Zn(2+) serves as cofactor.

Its subcellular location is the periplasm. Functionally, murein endopeptidase that cleaves the D-alanyl-meso-2,6-diamino-pimelyl amide bond that connects peptidoglycan strands. Likely plays a role in the removal of murein from the sacculus. This Salmonella paratyphi B (strain ATCC BAA-1250 / SPB7) protein is Penicillin-insensitive murein endopeptidase.